The chain runs to 950 residues: Leucine--tRNA ligase (950 aa).

Residues 72 to 83 (PYPSGEGLHVGH) carry the 'HIGH' region motif. A 'KMSKS' region motif is present at residues 722-726 (KIGKS). An ATP-binding site is contributed by Lys-725.

Belongs to the class-I aminoacyl-tRNA synthetase family.

It is found in the cytoplasm. It carries out the reaction tRNA(Leu) + L-leucine + ATP = L-leucyl-tRNA(Leu) + AMP + diphosphate. This is Leucine--tRNA ligase from Mycobacterium sp. (strain JLS).